The following is a 120-amino-acid chain: Large ribosomal subunit protein uL18 (120 aa).

The protein belongs to the universal ribosomal protein uL18 family. As to quaternary structure, part of the 50S ribosomal subunit; part of the 5S rRNA/L5/L18/L25 subcomplex. Contacts the 5S and 23S rRNAs.

In terms of biological role, this is one of the proteins that bind and probably mediate the attachment of the 5S RNA into the large ribosomal subunit, where it forms part of the central protuberance. The chain is Large ribosomal subunit protein uL18 from Rhizobium leguminosarum bv. trifolii (strain WSM2304).